The following is a 154-amino-acid chain: UPF0127 protein TSIB_1463 (154 aa).

It belongs to the UPF0127 family.

The chain is UPF0127 protein TSIB_1463 from Thermococcus sibiricus (strain DSM 12597 / MM 739).